We begin with the raw amino-acid sequence, 126 residues long: Protein ApaG (126 aa).

Residues 2–126 (DISTPCIKCQ…FRLAIPNILN (125 aa)) form the ApaG domain.

The polypeptide is Protein ApaG (Vibrio atlanticus (strain LGP32) (Vibrio splendidus (strain Mel32))).